The primary structure comprises 290 residues: tRNA (guanine-N(7)-)-methyltransferase (290 aa).

Basic and acidic residues-rich tracts occupy residues 1–12 (MSDSLHTPEEPR) and 20–43 (AHAH…DGPK). The segment at 1–49 (MSDSLHTPEEPRPGPGEQLAHAHDGSLRHTRAKGEPRFPDGPKADPAGS) is disordered. The S-adenosyl-L-methionine site is built by Glu-104, Asp-129, Asp-156, and Asp-179. The active site involves Asp-179. Substrate-binding positions include Lys-183, Asp-215, and 252 to 255 (TRFE).

Belongs to the class I-like SAM-binding methyltransferase superfamily. TrmB family.

It catalyses the reaction guanosine(46) in tRNA + S-adenosyl-L-methionine = N(7)-methylguanosine(46) in tRNA + S-adenosyl-L-homocysteine. The protein operates within tRNA modification; N(7)-methylguanine-tRNA biosynthesis. Catalyzes the formation of N(7)-methylguanine at position 46 (m7G46) in tRNA. This is tRNA (guanine-N(7)-)-methyltransferase from Streptomyces avermitilis (strain ATCC 31267 / DSM 46492 / JCM 5070 / NBRC 14893 / NCIMB 12804 / NRRL 8165 / MA-4680).